Reading from the N-terminus, the 381-residue chain is Phosphatidyl-myo-inositol mannosyltransferase (381 aa).

2 residues coordinate GDP-alpha-D-mannose: Y9 and G16. A 1,2-diacyl-sn-glycero-3-phospho-(1D-myo-inositol)-binding positions include Q18, 69-70 (FN), and R75. GDP-alpha-D-mannose contacts are provided by residues R204, 209–210 (RK), 251–253 (LDD), R256, 274–278 (ESFGI), and E282.

Belongs to the glycosyltransferase group 1 family. Glycosyltransferase 4 subfamily. In terms of assembly, monomer. Mg(2+) serves as cofactor.

It localises to the cell membrane. The enzyme catalyses a 1,2-diacyl-sn-glycero-3-phospho-(1D-myo-inositol) + GDP-alpha-D-mannose = a 1,2-diacyl-sn-glycero-3-phospho-[alpha-D-mannopyranosyl-(1&lt;-&gt;6)-D-myo-inositol] + GDP + H(+). It functions in the pathway phospholipid metabolism; phosphatidylinositol metabolism. In terms of biological role, involved in the biosynthesis of phosphatidyl-myo-inositol mannosides (PIM) which are early precursors in the biosynthesis of lipomannans (LM) and lipoarabinomannans (LAM). Catalyzes the addition of a mannosyl residue from GDP-D-mannose (GDP-Man) to the position 2 of the carrier lipid phosphatidyl-myo-inositol (PI) to generate a phosphatidyl-myo-inositol bearing an alpha-1,2-linked mannose residue (PIM1). This Propionibacterium freudenreichii subsp. shermanii (strain ATCC 9614 / DSM 4902 / CIP 103027 / NCIMB 8099 / CIRM-BIA1) protein is Phosphatidyl-myo-inositol mannosyltransferase.